Here is a 297-residue protein sequence, read N- to C-terminus: 5'-3' exonuclease (297 aa).

The 5'-3' exonuclease domain maps to 171–262; it reads EPDQIVDFKA…MKLEKELFAI (92 aa).

Functionally, 5'-3' exonuclease acting preferentially on double-stranded DNA. This chain is 5'-3' exonuclease (polA), found in Mycoplasmopsis pulmonis (strain UAB CTIP) (Mycoplasma pulmonis).